We begin with the raw amino-acid sequence, 242 residues long: MKSKKELMDALNKLVITEICSIFPDIQRVWEDQEFQKKFASTIGVKPKDVTNVPKRNKSSYLFFCQEIRPSIVAEMPDIKPNQVMVHLGKKWSELPLEDRKKYDVMAVEDRKRYLASKEANKKLNKPVKISGYLQFCADERKIKLKFPDLTTKDITAKLGGMWNDYKKNNPQYLKSKYGYEIVEQHYDYEKNEIDKENIIPSSHRRKMVPSIPVSICSSNVKAIQELIGTTKSSKKNKEIKV.

2 consecutive DNA-binding regions (HMG box) follow at residues 54–122 (PKRN…EANK) and 126–197 (KPVK…IDKE).

The protein localises to the host nucleus. This is High mobility group protein homolog (EF1) from Acheta domesticus (House cricket).